Reading from the N-terminus, the 449-residue chain is Phosphoglucosamine mutase (449 aa).

Ser102 functions as the Phosphoserine intermediate in the catalytic mechanism. The Mg(2+) site is built by Ser102, Asp241, Asp243, and Asp245. At Ser102 the chain carries Phosphoserine.

This sequence belongs to the phosphohexose mutase family. The cofactor is Mg(2+). Activated by phosphorylation.

The enzyme catalyses alpha-D-glucosamine 1-phosphate = D-glucosamine 6-phosphate. Its function is as follows. Catalyzes the conversion of glucosamine-6-phosphate to glucosamine-1-phosphate. The sequence is that of Phosphoglucosamine mutase from Pseudoalteromonas translucida (strain TAC 125).